Consider the following 324-residue polypeptide: 2,3,4,5-tetrahydropyridine-2,6-dicarboxylate N-succinyltransferase (324 aa).

Mg(2+) contacts are provided by Asp-173 and Glu-190. Glu-206 acts as the Acyl-anhydride intermediate in catalysis. Succinyl-CoA is bound by residues Arg-208, Gly-223, Ser-226, Ala-249, 264–265, Gly-272, Lys-284, and 297–300; these read EA and RRNS.

It belongs to the type 2 tetrahydrodipicolinate N-succinyltransferase family. In terms of assembly, homotrimer.

Its subcellular location is the cytoplasm. The catalysed reaction is (S)-2,3,4,5-tetrahydrodipicolinate + succinyl-CoA + H2O = (S)-2-succinylamino-6-oxoheptanedioate + CoA. It functions in the pathway amino-acid biosynthesis; L-lysine biosynthesis via DAP pathway; LL-2,6-diaminopimelate from (S)-tetrahydrodipicolinate (succinylase route): step 1/3. Catalyzes the conversion of the cyclic tetrahydrodipicolinate (THDP) into the acyclic N-succinyl-L-2-amino-6-oxopimelate using succinyl-CoA. This chain is 2,3,4,5-tetrahydropyridine-2,6-dicarboxylate N-succinyltransferase, found in Geodermatophilus obscurus (strain ATCC 25078 / DSM 43160 / JCM 3152 / CCUG 61914 / KCC A-0152 / KCTC 9177 / NBRC 13315 / NRRL B-3577 / G-20).